The chain runs to 700 residues: Polyribonucleotide nucleotidyltransferase (700 aa).

2 residues coordinate Mg(2+): D487 and D493. Positions 554 to 613 (PRLLTIKIHPDKIRDVIGKGGSTIQAITKDTGTQIDIQDDGTIVIASVNNAAAREAKRRI) constitute a KH domain. The region spanning 623–691 (GRIYEGKVAK…KQGRIRLSIK (69 aa)) is the S1 motif domain.

It belongs to the polyribonucleotide nucleotidyltransferase family. In terms of assembly, component of the RNA degradosome, which is a multiprotein complex involved in RNA processing and mRNA degradation. The cofactor is Mg(2+).

It is found in the cytoplasm. It catalyses the reaction RNA(n+1) + phosphate = RNA(n) + a ribonucleoside 5'-diphosphate. Its function is as follows. Involved in mRNA degradation. Catalyzes the phosphorolysis of single-stranded polyribonucleotides processively in the 3'- to 5'-direction. The polypeptide is Polyribonucleotide nucleotidyltransferase (Xylella fastidiosa (strain M12)).